The chain runs to 865 residues: 3-O-alpha-D-mannopyranosyl-alpha-D-mannopyranose xylosylphosphotransferase (865 aa).

A compositionally biased stretch (polar residues) spans Met1 to Ser10. The disordered stretch occupies residues Met1 to Arg66. At Met1 to Thr84 the chain is on the cytoplasmic side. Composition is skewed to low complexity over residues Ser17–Ser26 and Ser40–Ser60. Residues Leu85 to Ile105 form a helical membrane-spanning segment. The Lumenal portion of the chain corresponds to Ser106 to Asp865. N-linked (GlcNAc...) asparagine glycans are attached at residues Asn201 and Asn302. The tract at residues Lys283–Thr304 is disordered.

This sequence belongs to the XPT1 family. Requires Mn(2+) as cofactor.

It is found in the golgi apparatus membrane. It catalyses the reaction 3-alpha-D-mannopyranosyl-alpha-D-mannopyranose + UDP-alpha-D-xylose = 3-O-(6-O-alpha-D-xylosylphospho-alpha-D-mannopyranosyl)-alpha-D-mannopyranose + UMP + H(+). Its function is as follows. Xylosylphosphotransferase that is specific for UDP-xylose as a donor and mannose as an acceptor to form a xylose-alpha-1-phosphate-6-mannose linkage. Functions in the O-glycosylation of proteins en route through the secretory pathway. The sequence is that of 3-O-alpha-D-mannopyranosyl-alpha-D-mannopyranose xylosylphosphotransferase (XPT1) from Cryptococcus gattii serotype B (strain WM276 / ATCC MYA-4071) (Filobasidiella gattii).